We begin with the raw amino-acid sequence, 289 residues long: Ribosomal RNA small subunit methyltransferase A (289 aa).

Positions 21, 23, 48, 69, 94, and 120 each coordinate S-adenosyl-L-methionine.

It belongs to the class I-like SAM-binding methyltransferase superfamily. rRNA adenine N(6)-methyltransferase family. RsmA subfamily.

It localises to the cytoplasm. It catalyses the reaction adenosine(1518)/adenosine(1519) in 16S rRNA + 4 S-adenosyl-L-methionine = N(6)-dimethyladenosine(1518)/N(6)-dimethyladenosine(1519) in 16S rRNA + 4 S-adenosyl-L-homocysteine + 4 H(+). In terms of biological role, specifically dimethylates two adjacent adenosines (A1518 and A1519) in the loop of a conserved hairpin near the 3'-end of 16S rRNA in the 30S particle. May play a critical role in biogenesis of 30S subunits. This chain is Ribosomal RNA small subunit methyltransferase A, found in Actinobacillus pleuropneumoniae serotype 3 (strain JL03).